The following is a 666-amino-acid chain: DNA mismatch repair protein MutL (666 aa).

This sequence belongs to the DNA mismatch repair MutL/HexB family.

Its function is as follows. This protein is involved in the repair of mismatches in DNA. It is required for dam-dependent methyl-directed DNA mismatch repair. May act as a 'molecular matchmaker', a protein that promotes the formation of a stable complex between two or more DNA-binding proteins in an ATP-dependent manner without itself being part of a final effector complex. The chain is DNA mismatch repair protein MutL from Clostridium botulinum (strain ATCC 19397 / Type A).